Here is an 83-residue protein sequence, read N- to C-terminus: U25-theraphotoxin-Cg1b (83 aa).

An N-terminal signal peptide occupies residues 1–23 (MRFHTLLFLSFLLLVSCALICTA). A propeptide spanning residues 24 to 48 (QHPGLEKSGMFHENVGKGQHIEEKR) is cleaved from the precursor. Disulfide bonds link C50-C66, C57-C71, and C65-C79.

This sequence belongs to the neurotoxin 07 (Beta/delta-agtx) family. 03 (aga-4) subfamily. JZTX sub-subfamily. Expressed by the venom gland.

It localises to the secreted. Its function is as follows. Probable ion channel inhibitor. The protein is U25-theraphotoxin-Cg1b of Chilobrachys guangxiensis (Chinese earth tiger tarantula).